The sequence spans 179 residues: Ferric nitrobindin-like protein (179 aa).

The short motif at 17–23 is the GXWXGXG element; it reads GRWEGLG.

It belongs to the nitrobindin family.

The chain is Ferric nitrobindin-like protein from Thermobifida fusca (strain YX).